We begin with the raw amino-acid sequence, 103 residues long: Small ribosomal subunit protein uS10 (103 aa).

This sequence belongs to the universal ribosomal protein uS10 family. As to quaternary structure, part of the 30S ribosomal subunit.

Involved in the binding of tRNA to the ribosomes. This chain is Small ribosomal subunit protein uS10, found in Verminephrobacter eiseniae (strain EF01-2).